Here is a 535-residue protein sequence, read N- to C-terminus: Inositol 1,4,5-trisphosphate receptor-interacting protein-like 2 (535 aa).

Residues 1 to 38 (MSVHYTLNLRVFWPLVTGLCTALVCLYHVLRGSGGARA) form the signal peptide. Topologically, residues 39-43 (EPADG) are extracellular. Residues 44-64 (VDGGFPLLKVAVLLLLSYVLL) form a helical membrane-spanning segment. At 65-535 (RCRHAVRQRF…RTQGFLEGEP (471 aa)) the chain is on the cytoplasmic side. Position 139 is a phosphoserine (serine 139).

The protein belongs to the ITPRIP family.

It is found in the membrane. The protein is Inositol 1,4,5-trisphosphate receptor-interacting protein-like 2 (ITPRIPL2) of Homo sapiens (Human).